Consider the following 141-residue polypeptide: Large ribosomal subunit protein uL11 (141 aa).

This sequence belongs to the universal ribosomal protein uL11 family. As to quaternary structure, part of the ribosomal stalk of the 50S ribosomal subunit. Interacts with L10 and the large rRNA to form the base of the stalk. L10 forms an elongated spine to which L12 dimers bind in a sequential fashion forming a multimeric L10(L12)X complex. Post-translationally, one or more lysine residues are methylated.

Forms part of the ribosomal stalk which helps the ribosome interact with GTP-bound translation factors. The protein is Large ribosomal subunit protein uL11 of Listeria innocua serovar 6a (strain ATCC BAA-680 / CLIP 11262).